The sequence spans 434 residues: GTPase Obg (434 aa).

Residues 1-158 (MFLDTAKIKV…RELQLELKIL (158 aa)) enclose the Obg domain. In terms of domain architecture, OBG-type G spans 159–336 (ADVGLVGFPS…LLDATAELLD (178 aa)). GTP contacts are provided by residues 165–172 (GFPSVGKS), 190–194 (FTTIV), 212–215 (DLPG), 282–285 (NKMD), and 317–319 (SGL). The Mg(2+) site is built by Ser-172 and Thr-192. Residues 356 to 434 (GFDEEEKAFE…IGKFEFEFVD (79 aa)) form the OCT domain.

Belongs to the TRAFAC class OBG-HflX-like GTPase superfamily. OBG GTPase family. Monomer. Mg(2+) serves as cofactor.

Its subcellular location is the cytoplasm. Its function is as follows. An essential GTPase which binds GTP, GDP and possibly (p)ppGpp with moderate affinity, with high nucleotide exchange rates and a fairly low GTP hydrolysis rate. Plays a role in control of the cell cycle, stress response, ribosome biogenesis and in those bacteria that undergo differentiation, in morphogenesis control. This Streptococcus pneumoniae (strain ATCC 700669 / Spain 23F-1) protein is GTPase Obg.